We begin with the raw amino-acid sequence, 158 residues long: MGVFNFEEEATSIVAPATLHKALVTDADILTPKVIDAIKSIEIVEGNGGPGTIKKLTFVEDGETKYVLHKVELVDDANWANNYSIVGGVGLPDTVEKISFEAKLSAGPNGGSIAKLSVKYYTKGDAIPSEEEIKNGKAKGEGIFKALEGYCVANPDYN.

It belongs to the BetVI family.

In Pisum sativum (Garden pea), this protein is Disease resistance response protein DRRG49-C.